A 160-amino-acid polypeptide reads, in one-letter code: NADH-quinone oxidoreductase subunit I (160 aa).

4Fe-4S ferredoxin-type domains lie at Arg51 to Ala80 and Thr91 to Asn120. Cys60, Cys63, Cys66, Cys70, Cys100, Cys103, Cys106, and Cys110 together coordinate [4Fe-4S] cluster.

This sequence belongs to the complex I 23 kDa subunit family. NDH-1 is composed of 14 different subunits. Subunits NuoA, H, J, K, L, M, N constitute the membrane sector of the complex. The cofactor is [4Fe-4S] cluster.

It localises to the cell inner membrane. The enzyme catalyses a quinone + NADH + 5 H(+)(in) = a quinol + NAD(+) + 4 H(+)(out). Functionally, NDH-1 shuttles electrons from NADH, via FMN and iron-sulfur (Fe-S) centers, to quinones in the respiratory chain. The immediate electron acceptor for the enzyme in this species is believed to be ubiquinone. Couples the redox reaction to proton translocation (for every two electrons transferred, four hydrogen ions are translocated across the cytoplasmic membrane), and thus conserves the redox energy in a proton gradient. The chain is NADH-quinone oxidoreductase subunit I from Neorickettsia sennetsu (strain ATCC VR-367 / Miyayama) (Ehrlichia sennetsu).